Reading from the N-terminus, the 215-residue chain is ATP-dependent dethiobiotin synthetase BioD (215 aa).

13-18 (DIGKTV) is an ATP binding site. Threonine 17 is a Mg(2+) binding site. The active site involves lysine 38. Threonine 42 contributes to the substrate binding site. ATP contacts are provided by residues aspartate 50, 115 to 118 (EGAG), and 175 to 176 (NH). Mg(2+) is bound by residues aspartate 50 and glutamate 115.

Belongs to the dethiobiotin synthetase family. Homodimer. Requires Mg(2+) as cofactor.

Its subcellular location is the cytoplasm. It catalyses the reaction (7R,8S)-7,8-diammoniononanoate + CO2 + ATP = (4R,5S)-dethiobiotin + ADP + phosphate + 3 H(+). It participates in cofactor biosynthesis; biotin biosynthesis; biotin from 7,8-diaminononanoate: step 1/2. In terms of biological role, catalyzes a mechanistically unusual reaction, the ATP-dependent insertion of CO2 between the N7 and N8 nitrogen atoms of 7,8-diaminopelargonic acid (DAPA, also called 7,8-diammoniononanoate) to form a ureido ring. This chain is ATP-dependent dethiobiotin synthetase BioD, found in Neisseria meningitidis serogroup B (strain ATCC BAA-335 / MC58).